Here is a 147-residue protein sequence, read N- to C-terminus: Arginine repressor (147 aa).

The protein belongs to the ArgR family.

The protein resides in the cytoplasm. It participates in amino-acid biosynthesis; L-arginine biosynthesis [regulation]. Its function is as follows. Regulates arginine biosynthesis genes. This Chlamydia felis (strain Fe/C-56) (Chlamydophila felis) protein is Arginine repressor.